We begin with the raw amino-acid sequence, 81 residues long: Photosystem I iron-sulfur center (81 aa).

4Fe-4S ferredoxin-type domains are found at residues 2–31 (AHAV…MIPW) and 39–68 (IASA…VRVY). Residues C11, C14, C17, C21, C48, C51, C54, and C58 each contribute to the [4Fe-4S] cluster site.

The eukaryotic PSI reaction center is composed of at least 11 subunits. [4Fe-4S] cluster serves as cofactor.

It is found in the plastid. It localises to the chloroplast thylakoid membrane. The enzyme catalyses reduced [plastocyanin] + hnu + oxidized [2Fe-2S]-[ferredoxin] = oxidized [plastocyanin] + reduced [2Fe-2S]-[ferredoxin]. In terms of biological role, apoprotein for the two 4Fe-4S centers FA and FB of photosystem I (PSI); essential for photochemical activity. FB is the terminal electron acceptor of PSI, donating electrons to ferredoxin. The C-terminus interacts with PsaA/B/D and helps assemble the protein into the PSI complex. Required for binding of PsaD and PsaE to PSI. PSI is a plastocyanin-ferredoxin oxidoreductase, converting photonic excitation into a charge separation, which transfers an electron from the donor P700 chlorophyll pair to the spectroscopically characterized acceptors A0, A1, FX, FA and FB in turn. The polypeptide is Photosystem I iron-sulfur center (Marchantia polymorpha (Common liverwort)).